The primary structure comprises 125 residues: DNA-directed RNA polymerase subunit omega (125 aa).

It belongs to the RNA polymerase subunit omega family. In terms of assembly, the RNAP catalytic core consists of 2 alpha, 1 beta, 1 beta' and 1 omega subunit. When a sigma factor is associated with the core the holoenzyme is formed, which can initiate transcription.

It catalyses the reaction RNA(n) + a ribonucleoside 5'-triphosphate = RNA(n+1) + diphosphate. Its function is as follows. Promotes RNA polymerase assembly. Latches the N- and C-terminal regions of the beta' subunit thereby facilitating its interaction with the beta and alpha subunits. This chain is DNA-directed RNA polymerase subunit omega, found in Zymomonas mobilis subsp. mobilis (strain ATCC 31821 / ZM4 / CP4).